The sequence spans 427 residues: Enolase (427 aa).

A (2R)-2-phosphoglycerate-binding site is contributed by glutamine 162. Catalysis depends on glutamate 204, which acts as the Proton donor. Aspartate 241, glutamate 284, and aspartate 311 together coordinate Mg(2+). The (2R)-2-phosphoglycerate site is built by lysine 336, arginine 365, serine 366, and lysine 387. Lysine 336 (proton acceptor) is an active-site residue.

It belongs to the enolase family. Mg(2+) serves as cofactor.

The protein resides in the cytoplasm. It is found in the secreted. It localises to the cell surface. It carries out the reaction (2R)-2-phosphoglycerate = phosphoenolpyruvate + H2O. It participates in carbohydrate degradation; glycolysis; pyruvate from D-glyceraldehyde 3-phosphate: step 4/5. In terms of biological role, catalyzes the reversible conversion of 2-phosphoglycerate (2-PG) into phosphoenolpyruvate (PEP). It is essential for the degradation of carbohydrates via glycolysis. This chain is Enolase, found in Corynebacterium kroppenstedtii (strain DSM 44385 / JCM 11950 / CIP 105744 / CCUG 35717).